A 423-amino-acid chain; its full sequence is Aspartic protease-like protein pytH (423 aa).

The signal sequence occupies residues 1–16; it reads MWLSVALLTLLDGALA. One can recognise a Peptidase A1 domain in the interval 38 to 416; it reads TTDAIQIGTP…DFDKLRVGLA (379 aa). Aspartate 56 is an active-site residue. Asparagine 88, asparagine 97, asparagine 168, asparagine 196, asparagine 231, and asparagine 279 each carry an N-linked (GlcNAc...) asparagine glycan. The active site involves aspartate 291. Asparagine 330 is a glycosylation site (N-linked (GlcNAc...) asparagine). A disulfide bridge links cysteine 338 with cysteine 377.

Belongs to the peptidase A1 family.

The protein operates within secondary metabolite biosynthesis. In terms of biological role, aspartic protease-like protein; part of the gene cluster that mediates the biosynthesis of pyranterreones, a family of antioxidative compounds. The first step of pyranonigrins biosynthesis is performed by the hybrid PKS-NRPS synthetase pytA that condenses 4 malonyl-CoA units ato the acetyl starter unit by the modular PKS of pytA. The acyl chain is then connected to an L-serine through the amide bond by the modular NRPS of pytA. A tetramic acid is formed and released from the PKS-NRPS pytA to give pyranterreone 5 with the help of the thioesterase pytI. Pyranterreone 5 could be methylated by pytC to afford pyranterreone 6. Both pyranterreones 5 and 6 are subsequently oxidized by the FAD-linked oxidoreductase pytB and the cytochrome P450 monooxygenase pytD to form the fused gamma-pyrone core, resulting in pyranterreones 7 and 11, respectively. The hydroxy group at C-8 of pyranterreones 7 and 11 are dehydrated by the aspartyl protease pytH to form a delta-7 double bond to give pyranterreones 3 and 1, 2 accordingly. The exo-methylene of pyranterreone 3 could be reduced into a pendant methyl by reductase pytE to provide pyranterreone 4, also known as cordylactam. Pyranterreone 4 can be reconverted to pyranterreone 3 through pytB-catalyzed dehydrogenation or further oxidized to pyranterreones 9 and 10. This Aspergillus terreus (strain NIH 2624 / FGSC A1156) protein is Aspartic protease-like protein pytH.